The sequence spans 389 residues: Succinyl-diaminopimelate desuccinylase (389 aa).

A Zn(2+)-binding site is contributed by His72. Residue Asp74 is part of the active site. Asp105 is a binding site for Zn(2+). Catalysis depends on Glu144, which acts as the Proton acceptor. Residues Glu145, Glu173, and His362 each contribute to the Zn(2+) site.

The protein belongs to the peptidase M20A family. DapE subfamily. Homodimer. It depends on Zn(2+) as a cofactor. The cofactor is Co(2+).

The catalysed reaction is N-succinyl-(2S,6S)-2,6-diaminopimelate + H2O = (2S,6S)-2,6-diaminopimelate + succinate. The protein operates within amino-acid biosynthesis; L-lysine biosynthesis via DAP pathway; LL-2,6-diaminopimelate from (S)-tetrahydrodipicolinate (succinylase route): step 3/3. Functionally, catalyzes the hydrolysis of N-succinyl-L,L-diaminopimelic acid (SDAP), forming succinate and LL-2,6-diaminopimelate (DAP), an intermediate involved in the bacterial biosynthesis of lysine and meso-diaminopimelic acid, an essential component of bacterial cell walls. The polypeptide is Succinyl-diaminopimelate desuccinylase (Rhodopseudomonas palustris (strain HaA2)).